Reading from the N-terminus, the 72-residue chain is Conotoxin Vc6.16 (72 aa).

Residues 1–19 form the signal peptide; it reads MQKLIILLLVAAVLMSTQA. The propeptide occupies 20 to 44; the sequence is LFQEKRPKEKIDLLSKRKTDAEKQQ. Intrachain disulfides connect C48/C62, C55/C66, and C61/C71.

This sequence belongs to the conotoxin O2 superfamily. In terms of tissue distribution, expressed by the venom duct.

It is found in the secreted. Inhibits voltage-gated ion channels. The chain is Conotoxin Vc6.16 from Conus victoriae (Queen Victoria cone).